The primary structure comprises 88 residues: Long neurotoxin 31 (88 aa).

Positions 1 to 21 are cleaved as a signal peptide; the sequence is MKTLLLTLVVVTIVCLDLGNS. 5 cysteine pairs are disulfide-bonded: Cys24–Cys42, Cys35–Cys63, Cys48–Cys52, Cys67–Cys78, and Cys79–Cys84.

Belongs to the three-finger toxin family. Long-chain subfamily. Type II alpha-neurotoxin sub-subfamily. As to expression, expressed by the venom gland.

It is found in the secreted. Functionally, binds with high affinity to muscular (alpha-1/CHRNA1) and neuronal (alpha-7/CHRNA7) nicotinic acetylcholine receptor (nAChR) and inhibits acetylcholine from binding to the receptor, thereby impairing neuromuscular and neuronal transmission. In Drysdalia coronoides (White-lipped snake), this protein is Long neurotoxin 31.